Consider the following 388-residue polypeptide: Succinate--CoA ligase [ADP-forming] subunit beta (388 aa).

The region spanning 9-244 is the ATP-grasp domain; it reads KQLFAEFGLP…ASQEDAREAH (236 aa). ATP is bound by residues lysine 46, 53–55, glutamate 99, serine 102, and glutamate 107; that span reads GRG. Asparagine 199 and aspartate 213 together coordinate Mg(2+). Substrate contacts are provided by residues asparagine 264 and 321-323; that span reads GIV.

It belongs to the succinate/malate CoA ligase beta subunit family. As to quaternary structure, heterotetramer of two alpha and two beta subunits. Mg(2+) is required as a cofactor.

It carries out the reaction succinate + ATP + CoA = succinyl-CoA + ADP + phosphate. The enzyme catalyses GTP + succinate + CoA = succinyl-CoA + GDP + phosphate. It participates in carbohydrate metabolism; tricarboxylic acid cycle; succinate from succinyl-CoA (ligase route): step 1/1. In terms of biological role, succinyl-CoA synthetase functions in the citric acid cycle (TCA), coupling the hydrolysis of succinyl-CoA to the synthesis of either ATP or GTP and thus represents the only step of substrate-level phosphorylation in the TCA. The beta subunit provides nucleotide specificity of the enzyme and binds the substrate succinate, while the binding sites for coenzyme A and phosphate are found in the alpha subunit. The chain is Succinate--CoA ligase [ADP-forming] subunit beta from Vibrio cholerae serotype O1 (strain ATCC 39541 / Classical Ogawa 395 / O395).